Here is a 615-residue protein sequence, read N- to C-terminus: Mitogen-activated protein kinase 18 (615 aa).

The region spanning 25–316 (YRILEVIGKG…PAEALADPYF (292 aa)) is the Protein kinase domain. Residues 31–39 (IGKGSYGVV) and K54 each bind ATP. D151 functions as the Proton acceptor in the catalytic mechanism. A Phosphothreonine modification is found at T187. Positions 187-189 (TDY) match the TXY motif. Position 189 is a phosphotyrosine (Y189). T192 carries the post-translational modification Phosphothreonine. 2 disordered regions span residues 414 to 483 (RSTV…ESSV) and 510 to 544 (NTMT…PPAA). Positions 415–426 (STVHSTVVHSTS) are enriched in low complexity. The span at 445–459 (NGASSAGHPSTSAYP) shows a compositional bias: polar residues. Residues 464–473 (GPPPRVPPSG) show a composition bias toward pro residues. Polar residues-rich tracts occupy residues 510 to 522 (NTMT…NIEA) and 532 to 544 (PVHQ…PPAA).

It belongs to the protein kinase superfamily. CMGC Ser/Thr protein kinase family. MAP kinase subfamily. Interacts with PHS1. Binds to MAPKKK20. Post-translationally, dually phosphorylated on Thr-187 and Tyr-189, which activates the enzyme. Phosphorylated by MAPKKK20. As to expression, expressed in roots, seedlings, leaves, flower buds, flowers and siliques.

The protein localises to the nucleus. The protein resides in the cytoplasm. The enzyme catalyses L-seryl-[protein] + ATP = O-phospho-L-seryl-[protein] + ADP + H(+). The catalysed reaction is L-threonyl-[protein] + ATP = O-phospho-L-threonyl-[protein] + ADP + H(+). Activated by threonine and tyrosine phosphorylation. Inactivated by phosphatase PHS1. Functionally, mitogen-activated protein kinase (MAPK) that is specifically regulated by PHS1 and MAPKKK20 and mediates signaling that regulates cortical microtubule functions, maybe through regulation of microtubule dynamic instability. The polypeptide is Mitogen-activated protein kinase 18 (Arabidopsis thaliana (Mouse-ear cress)).